A 161-amino-acid polypeptide reads, in one-letter code: 2-C-methyl-D-erythritol 2,4-cyclodiphosphate synthase (161 aa).

A divalent metal cation-binding residues include Asp10 and His12. 4-CDP-2-C-methyl-D-erythritol 2-phosphate-binding positions include 10–12 and 36–37; these read DVH and HS. His44 contacts a divalent metal cation. Residues 58–60, 63–67, 102–108, 134–137, Phe141, and Arg144 contribute to the 4-CDP-2-C-methyl-D-erythritol 2-phosphate site; these read DIG, FPDTD, AQAPKMA, and TTTE.

The protein belongs to the IspF family. Homotrimer. A divalent metal cation serves as cofactor.

It catalyses the reaction 4-CDP-2-C-methyl-D-erythritol 2-phosphate = 2-C-methyl-D-erythritol 2,4-cyclic diphosphate + CMP. It functions in the pathway isoprenoid biosynthesis; isopentenyl diphosphate biosynthesis via DXP pathway; isopentenyl diphosphate from 1-deoxy-D-xylulose 5-phosphate: step 4/6. In terms of biological role, involved in the biosynthesis of isopentenyl diphosphate (IPP) and dimethylallyl diphosphate (DMAPP), two major building blocks of isoprenoid compounds. Catalyzes the conversion of 4-diphosphocytidyl-2-C-methyl-D-erythritol 2-phosphate (CDP-ME2P) to 2-C-methyl-D-erythritol 2,4-cyclodiphosphate (ME-CPP) with a corresponding release of cytidine 5-monophosphate (CMP). This Shewanella sediminis (strain HAW-EB3) protein is 2-C-methyl-D-erythritol 2,4-cyclodiphosphate synthase.